The following is a 77-amino-acid chain: U8-lycotoxin-Ls1u (77 aa).

The first 20 residues, 1-20 (MKLIIFTGLVLFAIVSLIEA), serve as a signal peptide directing secretion. Positions 21 to 26 (QAENEK) are excised as a propeptide.

It belongs to the neurotoxin 19 (CSTX) family. 08 (U8-Lctx) subfamily. Post-translationally, contains 4 disulfide bonds. As to expression, expressed by the venom gland.

The protein localises to the secreted. In Lycosa singoriensis (Wolf spider), this protein is U8-lycotoxin-Ls1u.